A 176-amino-acid chain; its full sequence is ATP synthase subunit b (176 aa).

A helical transmembrane segment spans residues 24-43; it reads FAFRVVNFVIFAGIIWKAAG.

Belongs to the ATPase B chain family. F-type ATPases have 2 components, F(1) - the catalytic core - and F(0) - the membrane proton channel. F(1) has five subunits: alpha(3), beta(3), gamma(1), delta(1), epsilon(1). F(0) has three main subunits: a(1), b(2) and c(10-14). The alpha and beta chains form an alternating ring which encloses part of the gamma chain. F(1) is attached to F(0) by a central stalk formed by the gamma and epsilon chains, while a peripheral stalk is formed by the delta and b chains.

Its subcellular location is the cell inner membrane. Its function is as follows. F(1)F(0) ATP synthase produces ATP from ADP in the presence of a proton or sodium gradient. F-type ATPases consist of two structural domains, F(1) containing the extramembraneous catalytic core and F(0) containing the membrane proton channel, linked together by a central stalk and a peripheral stalk. During catalysis, ATP synthesis in the catalytic domain of F(1) is coupled via a rotary mechanism of the central stalk subunits to proton translocation. In terms of biological role, component of the F(0) channel, it forms part of the peripheral stalk, linking F(1) to F(0). This Nitratidesulfovibrio vulgaris (strain ATCC 29579 / DSM 644 / CCUG 34227 / NCIMB 8303 / VKM B-1760 / Hildenborough) (Desulfovibrio vulgaris) protein is ATP synthase subunit b.